Reading from the N-terminus, the 485-residue chain is Glutamate--tRNA ligase (485 aa).

Positions 11–21 match the 'HIGH' region motif; it reads PSPTGYMHVGN. Zn(2+)-binding residues include C108, C110, C135, and D137. The 'KMSKS' region motif lies at 252 to 256; that stretch reads KLSKR. K255 contributes to the ATP binding site.

The protein belongs to the class-I aminoacyl-tRNA synthetase family. Glutamate--tRNA ligase type 1 subfamily. In terms of assembly, monomer. The cofactor is Zn(2+).

It localises to the cytoplasm. The catalysed reaction is tRNA(Glu) + L-glutamate + ATP = L-glutamyl-tRNA(Glu) + AMP + diphosphate. In terms of biological role, catalyzes the attachment of glutamate to tRNA(Glu) in a two-step reaction: glutamate is first activated by ATP to form Glu-AMP and then transferred to the acceptor end of tRNA(Glu). The polypeptide is Glutamate--tRNA ligase (Clostridium botulinum (strain Okra / Type B1)).